Consider the following 419-residue polypeptide: Divinyl chlorophyllide a 8-vinyl-reductase, chloroplastic (419 aa).

The transit peptide at 1–71 (MSICSTVGAG…PIVVSSTPVV (71 aa)) directs the protein to the chloroplast.

The protein localises to the plastid. It localises to the chloroplast. The enzyme catalyses protochlorophyllide a + NADP(+) = 3,8-divinyl protochlorophyllide a + NADPH + H(+). The protein operates within porphyrin-containing compound metabolism; chlorophyll biosynthesis. Functionally, catalyzes the conversion of divinyl chlorophyllide to monovinyl chlorophyllide. Reduces the 8-vinyl group of the tetrapyrrole to an ethyl group using NADPH as the reductant. The best substrate is (3,8-divinyl)-chlorophyllide a (DV-Chlidea). Very low activity with (3,8-divinyl)-protochlorophyllide a (DV-Pchlidea) and (3,8-divinyl)-magnesium-protoporphyrin IX monomethyl ester (DV-MPE). No activity with (3,8-divinyl)-magnesium-protoporphyrin IX (DV-Mg-Proto) and (3,8-divinyl)-chlorophyll a (DV-Chla). The protein is Divinyl chlorophyllide a 8-vinyl-reductase, chloroplastic (DVR) of Cucumis sativus (Cucumber).